The primary structure comprises 223 residues: Noggin (223 aa).

The first 26 residues, 1 to 26 (MDPPRLRVATYLLLLSVGLLLHGGAC), serve as a signal peptide directing secretion. Asn61 carries an N-linked (GlcNAc...) asparagine glycan. 4 disulfide bridges follow: Cys143-Cys180, Cys166-Cys217, Cys172-Cys219, and Cys195-Cys204.

Belongs to the noggin family. In terms of assembly, homodimer.

The protein localises to the secreted. Functionally, inhibitor of bone morphogenetic proteins (BMP) signaling. In Takifugu rubripes (Japanese pufferfish), this protein is Noggin (nog).